The chain runs to 644 residues: Chaperone protein DnaK (644 aa).

Residue T199 is modified to Phosphothreonine; by autocatalysis. Positions 589–644 are disordered; it reads QALAEASHKLAEKMYSQGQGPQAGPGEEPSGQSGGTEKPVEGEVVDAEFEEVKNKK. The span at 604–619 shows a compositional bias: low complexity; it reads SQGQGPQAGPGEEPSG.

This sequence belongs to the heat shock protein 70 family.

Acts as a chaperone. This chain is Chaperone protein DnaK, found in Nitrosospira multiformis (strain ATCC 25196 / NCIMB 11849 / C 71).